Consider the following 561-residue polypeptide: Tectonic-like complex member MKS1 (561 aa).

In terms of domain architecture, C2 B9-type spans 314-442; that stretch reads LRLFVNGEVV…TVSTWRPMEL (129 aa).

In terms of assembly, part of the tectonic-like complex (also named B9 complex). Interacts with TMEM107. Interacts with TCTN3, AHI1, TCTN1, TCTN2, CC2D2A. Interacts with FLNA. Interacts with TMEM67. Interacts with B9D1 and B9D2. In terms of tissue distribution, widely expressed in embryo at 15.5 dpc, with a relatively strong expression in brain, liver, kidney and digits of the upper limbs. Highly expressed in bronchiolar epithelium.

The protein localises to the cytoplasm. The protein resides in the cytoskeleton. It localises to the cilium basal body. It is found in the microtubule organizing center. Its subcellular location is the centrosome. Its function is as follows. Component of the tectonic-like complex, a complex localized at the transition zone of primary cilia and acting as a barrier that prevents diffusion of transmembrane proteins between the cilia and plasma membranes. Involved in centrosome migration to the apical cell surface during early ciliogenesis. Required for ciliary structure and function, including a role in regulating length and appropriate number through modulating centrosome duplication. Required for cell branching morphology. This is Tectonic-like complex member MKS1 (Mks1) from Mus musculus (Mouse).